Here is a 340-residue protein sequence, read N- to C-terminus: Zinc finger protein 488 (340 aa).

Positions 72–187 (AELALLVAPG…SVFPAGESAD (116 aa)) are important for transcriptional repression activity. Residues 77–180 (LVAPGKPRPG…AERPELTSVF (104 aa)) form a disordered region. Over residues 82–91 (KPRPGKPLPP) the composition is skewed to pro residues. The span at 106-125 (PRMKDRQVDAQAQEREHDDP) shows a compositional bias: basic and acidic residues. 2 consecutive C2H2-type zinc fingers follow at residues 275–302 (NWCA…KKEH) and 317–339 (LACP…MTSH). The short motif at 298–305 (HKKEHAGP) is the Nuclear localization signal element.

Belongs to the krueppel C2H2-type zinc-finger protein family. As to quaternary structure, interacts with OLIG2.

The protein localises to the nucleus. Transcriptional repressor. Plays a role in oligodendrocyte differentiation, together with OLIG2. Mediates Notch signaling-activated formation of oligodendrocyte precursors. Promotes differentiation of adult neural stem progenitor cells (NSPCs) into mature oligodendrocytes and contributes to remyelination following nerve injury. In Homo sapiens (Human), this protein is Zinc finger protein 488 (ZNF488).